The following is a 219-amino-acid chain: ATP-dependent Clp protease proteolytic subunit 1 (219 aa).

The active-site Nucleophile is the Ser-113. Residue His-138 is part of the active site.

It belongs to the peptidase S14 family. In terms of assembly, fourteen ClpP subunits assemble into 2 heptameric rings which stack back to back to give a disk-like structure with a central cavity, resembling the structure of eukaryotic proteasomes.

Its subcellular location is the cytoplasm. It carries out the reaction Hydrolysis of proteins to small peptides in the presence of ATP and magnesium. alpha-casein is the usual test substrate. In the absence of ATP, only oligopeptides shorter than five residues are hydrolyzed (such as succinyl-Leu-Tyr-|-NHMec, and Leu-Tyr-Leu-|-Tyr-Trp, in which cleavage of the -Tyr-|-Leu- and -Tyr-|-Trp bonds also occurs).. Cleaves peptides in various proteins in a process that requires ATP hydrolysis. Has a chymotrypsin-like activity. Plays a major role in the degradation of misfolded proteins. Probably partially responsible for degradation of ECF sigma factor SigR prime. The protein is ATP-dependent Clp protease proteolytic subunit 1 of Streptomyces coelicolor (strain ATCC BAA-471 / A3(2) / M145).